The primary structure comprises 664 residues: Putative membrane protein Bcell_0381 (664 aa).

Acidic residues predominate over residues 588–616 (DVTQDENGEEKSEEDNKEEIVEENTEEDN). The segment at 588–622 (DVTQDENGEEKSEEDNKEEIVEENTEEDNKEEKTI) is disordered. A helical transmembrane segment spans residues 636-656 (YQFLLAGIIMLVGGSCIYVFY).

Its subcellular location is the cell membrane. The chain is Putative membrane protein Bcell_0381 from Evansella cellulosilytica (strain ATCC 21833 / DSM 2522 / FERM P-1141 / JCM 9156 / N-4) (Bacillus cellulosilyticus).